The following is a 95-amino-acid chain: Large ribosomal subunit protein bL25 (95 aa).

It belongs to the bacterial ribosomal protein bL25 family. Part of the 50S ribosomal subunit; part of the 5S rRNA/L5/L18/L25 subcomplex. Contacts the 5S rRNA. Binds to the 5S rRNA independently of L5 and L18.

In terms of biological role, this is one of the proteins that binds to the 5S RNA in the ribosome where it forms part of the central protuberance. The polypeptide is Large ribosomal subunit protein bL25 (Yersinia enterocolitica serotype O:8 / biotype 1B (strain NCTC 13174 / 8081)).